Reading from the N-terminus, the 235-residue chain is Mediator of RNA polymerase II transcription subunit 7 (235 aa).

The protein belongs to the Mediator complex subunit 7 family. Component of the Mediator complex.

Its subcellular location is the nucleus. Functionally, component of the Mediator complex, a coactivator involved in the regulated transcription of nearly all RNA polymerase II-dependent genes. Mediator functions as a bridge to convey information from gene-specific regulatory proteins to the basal RNA polymerase II transcription machinery. Mediator is recruited to promoters by direct interactions with regulatory proteins and serves as a scaffold for the assembly of a functional preinitiation complex with RNA polymerase II and the general transcription factors. In Yarrowia lipolytica (strain CLIB 122 / E 150) (Yeast), this protein is Mediator of RNA polymerase II transcription subunit 7 (MED7).